The primary structure comprises 267 residues: Eukaryotic translation initiation factor 3 subunit K (267 aa).

Positions 46–233 (FDCYANLALL…EARSEVKSER (188 aa)) constitute a PCI domain.

This sequence belongs to the eIF-3 subunit K family. As to quaternary structure, component of the eukaryotic translation initiation factor 3 (eIF-3) complex.

It localises to the cytoplasm. Functionally, component of the eukaryotic translation initiation factor 3 (eIF-3) complex, which is involved in protein synthesis of a specialized repertoire of mRNAs and, together with other initiation factors, stimulates binding of mRNA and methionyl-tRNAi to the 40S ribosome. The eIF-3 complex specifically targets and initiates translation of a subset of mRNAs involved in cell proliferation. The protein is Eukaryotic translation initiation factor 3 subunit K of Aspergillus niger (strain ATCC MYA-4892 / CBS 513.88 / FGSC A1513).